Reading from the N-terminus, the 327-residue chain is tRNA uridine(34) hydroxylase (327 aa).

The Rhodanese domain occupies 142–240 (DDPDTLVIDT…YLEQVPEAES (99 aa)). The active-site Cysteine persulfide intermediate is Cys-200.

It belongs to the TrhO family.

The enzyme catalyses uridine(34) in tRNA + AH2 + O2 = 5-hydroxyuridine(34) in tRNA + A + H2O. Its function is as follows. Catalyzes oxygen-dependent 5-hydroxyuridine (ho5U) modification at position 34 in tRNAs. In Synechococcus sp. (strain CC9605), this protein is tRNA uridine(34) hydroxylase.